A 267-amino-acid chain; its full sequence is Indole-3-glycerol phosphate synthase (267 aa).

Belongs to the TrpC family.

The enzyme catalyses 1-(2-carboxyphenylamino)-1-deoxy-D-ribulose 5-phosphate + H(+) = (1S,2R)-1-C-(indol-3-yl)glycerol 3-phosphate + CO2 + H2O. The protein operates within amino-acid biosynthesis; L-tryptophan biosynthesis; L-tryptophan from chorismate: step 4/5. This is Indole-3-glycerol phosphate synthase from Polynucleobacter asymbioticus (strain DSM 18221 / CIP 109841 / QLW-P1DMWA-1) (Polynucleobacter necessarius subsp. asymbioticus).